We begin with the raw amino-acid sequence, 454 residues long: tRNA modification GTPase MnmE (454 aa).

Residues Arg23, Glu80, and Lys120 each contribute to the (6S)-5-formyl-5,6,7,8-tetrahydrofolate site. The 162-residue stretch at 216–377 (GMKVVIAGRP…LRNHLKQSMG (162 aa)) folds into the TrmE-type G domain. Residue Asn226 participates in K(+) binding. GTP contacts are provided by residues 226 to 231 (NAGKSS), 245 to 251 (TDIAGTT), 270 to 273 (DTAG), 335 to 338 (NKAD), and 358 to 360 (SAR). Mg(2+) is bound at residue Ser230. Residues Thr245, Ile247, and Thr250 each contribute to the K(+) site. Mg(2+) is bound at residue Thr251. Lys454 contributes to the (6S)-5-formyl-5,6,7,8-tetrahydrofolate binding site.

This sequence belongs to the TRAFAC class TrmE-Era-EngA-EngB-Septin-like GTPase superfamily. TrmE GTPase family. In terms of assembly, homodimer. Heterotetramer of two MnmE and two MnmG subunits. K(+) is required as a cofactor.

Its subcellular location is the cytoplasm. Exhibits a very high intrinsic GTPase hydrolysis rate. Involved in the addition of a carboxymethylaminomethyl (cmnm) group at the wobble position (U34) of certain tRNAs, forming tRNA-cmnm(5)s(2)U34. This is tRNA modification GTPase MnmE from Salmonella typhi.